Consider the following 209-residue polypeptide: Segregation and condensation protein B (209 aa).

The protein belongs to the ScpB family. As to quaternary structure, homodimer. Homodimerization may be required to stabilize the binding of ScpA to the Smc head domains. Component of a cohesin-like complex composed of ScpA, ScpB and the Smc homodimer, in which ScpA and ScpB bind to the head domain of Smc. The presence of the three proteins is required for the association of the complex with DNA.

The protein resides in the cytoplasm. Its function is as follows. Participates in chromosomal partition during cell division. May act via the formation of a condensin-like complex containing Smc and ScpA that pull DNA away from mid-cell into both cell halves. This chain is Segregation and condensation protein B, found in Geobacillus thermodenitrificans (strain NG80-2).